A 226-amino-acid chain; its full sequence is Nucleoside triphosphate pyrophosphatase (226 aa).

Aspartate 79 serves as the catalytic Proton acceptor. The tract at residues 204-226 (WSRGTSTHPTPGTSATPKPNPGA) is disordered. Over residues 206–220 (RGTSTHPTPGTSATP) the composition is skewed to polar residues.

This sequence belongs to the Maf family. A divalent metal cation serves as cofactor.

The protein resides in the cytoplasm. The catalysed reaction is a ribonucleoside 5'-triphosphate + H2O = a ribonucleoside 5'-phosphate + diphosphate + H(+). It carries out the reaction a 2'-deoxyribonucleoside 5'-triphosphate + H2O = a 2'-deoxyribonucleoside 5'-phosphate + diphosphate + H(+). Its function is as follows. Nucleoside triphosphate pyrophosphatase. May have a dual role in cell division arrest and in preventing the incorporation of modified nucleotides into cellular nucleic acids. This chain is Nucleoside triphosphate pyrophosphatase, found in Salinispora tropica (strain ATCC BAA-916 / DSM 44818 / JCM 13857 / NBRC 105044 / CNB-440).